The primary structure comprises 195 residues: Probable nicotinate-nucleotide adenylyltransferase (195 aa).

The protein belongs to the NadD family.

It catalyses the reaction nicotinate beta-D-ribonucleotide + ATP + H(+) = deamido-NAD(+) + diphosphate. Its pathway is cofactor biosynthesis; NAD(+) biosynthesis; deamido-NAD(+) from nicotinate D-ribonucleotide: step 1/1. Catalyzes the reversible adenylation of nicotinate mononucleotide (NaMN) to nicotinic acid adenine dinucleotide (NaAD). The protein is Probable nicotinate-nucleotide adenylyltransferase of Opitutus terrae (strain DSM 11246 / JCM 15787 / PB90-1).